We begin with the raw amino-acid sequence, 552 residues long: Probable acyl-activating enzyme 5, peroxisomal (552 aa).

The Microbody targeting signal signature appears at 550–552 (SRM).

It belongs to the ATP-dependent AMP-binding enzyme family. As to expression, expressed in roots, stems and developing seeds.

It localises to the peroxisome. Functionally, may act as an acid--thiol ligase that activates carboxylic acids by forming acyl-CoAs. This is Probable acyl-activating enzyme 5, peroxisomal (AAE5) from Arabidopsis thaliana (Mouse-ear cress).